Here is a 524-residue protein sequence, read N- to C-terminus: Bifunctional purine biosynthesis protein PurH (524 aa).

One can recognise an MGS-like domain in the interval 1–149 (MSDPLIKRAL…KNNESVTVLT (149 aa)).

This sequence belongs to the PurH family.

The catalysed reaction is (6R)-10-formyltetrahydrofolate + 5-amino-1-(5-phospho-beta-D-ribosyl)imidazole-4-carboxamide = 5-formamido-1-(5-phospho-D-ribosyl)imidazole-4-carboxamide + (6S)-5,6,7,8-tetrahydrofolate. It carries out the reaction IMP + H2O = 5-formamido-1-(5-phospho-D-ribosyl)imidazole-4-carboxamide. It functions in the pathway purine metabolism; IMP biosynthesis via de novo pathway; 5-formamido-1-(5-phospho-D-ribosyl)imidazole-4-carboxamide from 5-amino-1-(5-phospho-D-ribosyl)imidazole-4-carboxamide (10-formyl THF route): step 1/1. Its pathway is purine metabolism; IMP biosynthesis via de novo pathway; IMP from 5-formamido-1-(5-phospho-D-ribosyl)imidazole-4-carboxamide: step 1/1. The chain is Bifunctional purine biosynthesis protein PurH from Chlorobium luteolum (strain DSM 273 / BCRC 81028 / 2530) (Pelodictyon luteolum).